Here is a 160-residue protein sequence, read N- to C-terminus: Cytochrome b6-f complex subunit 4 (160 aa).

Transmembrane regions (helical) follow at residues 36–56, 95–115, and 131–151; these read LLYIFPVVILGTIACNVGLAV, LLGVLLMVSVPVGLLTVPFLE, and TVFLIGTAVALWLGIGATLPI.

It belongs to the cytochrome b family. PetD subfamily. As to quaternary structure, the 4 large subunits of the cytochrome b6-f complex are cytochrome b6, subunit IV (17 kDa polypeptide, petD), cytochrome f and the Rieske protein, while the 4 small subunits are petG, petL, petM and petN. The complex functions as a dimer.

The protein localises to the plastid. It localises to the chloroplast thylakoid membrane. In terms of biological role, component of the cytochrome b6-f complex, which mediates electron transfer between photosystem II (PSII) and photosystem I (PSI), cyclic electron flow around PSI, and state transitions. The polypeptide is Cytochrome b6-f complex subunit 4 (Daucus carota (Wild carrot)).